A 183-amino-acid chain; its full sequence is Holliday junction branch migration complex subunit RuvA (183 aa).

The segment at 1 to 63 (MIVGLIGVVE…EDAHLLYGFL (63 aa)) is domain I. The tract at residues 64–141 (EEGEKILFER…IQDETKPMHN (78 aa)) is domain II. Position 141 (Asn141) is a region of interest, flexible linker. A domain III region spans residues 141–183 (NEVFLALESLGFKSAEINKVLKTLKPSLSIEAAIKEALQQLRS).

This sequence belongs to the RuvA family. Homotetramer. Forms an RuvA(8)-RuvB(12)-Holliday junction (HJ) complex. HJ DNA is sandwiched between 2 RuvA tetramers; dsDNA enters through RuvA and exits via RuvB. An RuvB hexamer assembles on each DNA strand where it exits the tetramer. Each RuvB hexamer is contacted by two RuvA subunits (via domain III) on 2 adjacent RuvB subunits; this complex drives branch migration. In the full resolvosome a probable DNA-RuvA(4)-RuvB(12)-RuvC(2) complex forms which resolves the HJ.

It localises to the cytoplasm. The RuvA-RuvB-RuvC complex processes Holliday junction (HJ) DNA during genetic recombination and DNA repair, while the RuvA-RuvB complex plays an important role in the rescue of blocked DNA replication forks via replication fork reversal (RFR). RuvA specifically binds to HJ cruciform DNA, conferring on it an open structure. The RuvB hexamer acts as an ATP-dependent pump, pulling dsDNA into and through the RuvAB complex. HJ branch migration allows RuvC to scan DNA until it finds its consensus sequence, where it cleaves and resolves the cruciform DNA. The protein is Holliday junction branch migration complex subunit RuvA of Helicobacter pylori (strain G27).